Reading from the N-terminus, the 363-residue chain is Spermidine/putrescine import ATP-binding protein PotA (363 aa).

An ABC transporter domain is found at 5–236 (IKLKHVRKEY…PVNDFVARFI (232 aa)). 38–45 (GPSGSGKT) is a binding site for ATP.

It belongs to the ABC transporter superfamily. Spermidine/putrescine importer (TC 3.A.1.11.1) family. As to quaternary structure, the complex is composed of two ATP-binding proteins (PotA), two transmembrane proteins (PotB and PotC) and a solute-binding protein (PotD).

The protein resides in the cell membrane. The enzyme catalyses ATP + H2O + polyamine-[polyamine-binding protein]Side 1 = ADP + phosphate + polyamineSide 2 + [polyamine-binding protein]Side 1.. Its function is as follows. Part of the ABC transporter complex PotABCD involved in spermidine/putrescine import. Responsible for energy coupling to the transport system. The chain is Spermidine/putrescine import ATP-binding protein PotA from Lactobacillus johnsonii (strain CNCM I-12250 / La1 / NCC 533).